We begin with the raw amino-acid sequence, 641 residues long: Epithelial sodium channel subunit beta (641 aa).

At 1 to 50 (MHLKKYLLKGLHRLQKGPGYSYKELLVWYCNNTNTHGPKRIICEGPKKKA) the chain is on the cytoplasmic side. Residues 51–71 (MWFLITLLFTSLVCWQWGVFI) traverse the membrane as a helical segment. At 72 to 533 (RTYLSWEVSV…GGQFGFWMGG (462 aa)) the chain is on the extracellular side. 9 disulfide bridges follow: Cys-98-Cys-273, Cys-185-Cys-190, Cys-197-Cys-204, Cys-250-Cys-257, Cys-362-Cys-449, Cys-387-Cys-445, Cys-391-Cys-441, Cys-400-Cys-427, and Cys-402-Cys-416. N-linked (GlcNAc...) asparagine glycosylation occurs at Asn-141. Asn-261 is a glycosylation site (N-linked (GlcNAc...) asparagine). A helical transmembrane segment spans residues 534-554 (SVLCLIEFGEILIDFVWITII). Over 555 to 641 (KLVAFAKSLR…IESDSEGDAI (87 aa)) the chain is Cytoplasmic. Residues 593-624 (PDVARPGPDPGTYPDEQTLPIPGTPPPNYDSL) are disordered. A PY motif; recruits WW domain-containing proteins and is thereby required for ubiquitination and inhibition of the channel by NEDD4 and NEDD4L motif is present at residues 617 to 621 (PPPNY). Phosphoserine is present on residues Ser-634 and Ser-636.

It belongs to the amiloride-sensitive sodium channel (TC 1.A.6) family. SCNN1B subfamily. As to quaternary structure, component of the heterotrimeric epithelial sodium channel (ENaC) composed of an alpha/SCNN1A, a beta/SCNN1B and a gamma/SCNN1G subunit. An additional delta/SCNN1D subunit can replace the alpha/SCNN1A subunit to form an alternative channel with specific properties. Interacts with WWP1 (via WW domains). Interacts with WWP2 (via WW domains); inhibits the channel. Interacts with the full-length immature form of PCSK9 (pro-PCSK9). Interacts (N-glycosylated) with BPIFA1; the interaction is direct and inhibits the proteolytic processing of SCNN1A and SCNN1G and the activation of ENaC. Ubiquitinated. Can be ubiquitinated at multiple sites and undergo monoubiquitination and polyubiquitination. Ubiquitination by NEDD4 or NEDD4L inhibits the ENaC channel through endocytosis, intracellular retention and degradation of its individual subunits. However, some studies could not confirm the ubiquitination of this subunit of the ENaC. In terms of processing, phosphorylated on serine and threonine residues. Aldosterone and insulin increase the basal level of phosphorylation. Post-translationally, N-glycosylated. N-glycosylation is required for interaction with BPIFA1.

The protein resides in the apical cell membrane. Its subcellular location is the cytoplasmic vesicle membrane. The catalysed reaction is Na(+)(in) = Na(+)(out). With respect to regulation, originally identified and characterized by its inhibition by the diuretic drug amiloride. This is one of the three pore-forming subunits of the heterotrimeric epithelial sodium channel (ENaC), a critical regulator of sodium balance and fluid homeostasis. ENaC operates in epithelial tissues, where it mediates the electrodiffusion of sodium ions from extracellular fluid through the apical membrane of cells, with water following osmotically. It plays a key role in maintaining sodium homeostasis through electrogenic sodium reabsorption in the kidneys. Additionally, ENaC is essential for airway surface liquid homeostasis, which is crucial for proper mucus clearance. This chain is Epithelial sodium channel subunit beta, found in Canis lupus familiaris (Dog).